Consider the following 723-residue polypeptide: Threonine--tRNA ligase 1, cytoplasmic (723 aa).

The interval 1–46 (MFEEKASSPSGKMGGEEKPIGAGEEKQKEGGKKKNKEGSGDGGRAE) is disordered. Residues 14–39 (GGEEKPIGAGEEKQKEGGKKKNKEGS) are compositionally biased toward basic and acidic residues. The residue at position 39 (Ser-39) is a Phosphoserine. Positions 79 to 143 (DSKPIKVTLP…EEDCTLELLK (65 aa)) constitute a TGS domain. An N6-acetyllysine modification is found at Lys-243. Thr-246 carries the post-translational modification Phosphothreonine. Tyr-298 carries the post-translational modification Phosphotyrosine. A Phosphothreonine modification is found at Thr-453. At Ser-702 the chain carries Phosphoserine.

The protein belongs to the class-II aminoacyl-tRNA synthetase family. Homodimer. ISGylated.

The protein resides in the cytoplasm. It carries out the reaction tRNA(Thr) + L-threonine + ATP = L-threonyl-tRNA(Thr) + AMP + diphosphate + H(+). With respect to regulation, inhibited by borrelidin (BN, IC 50 is 7 nM), which binds to 4 distinct subsites in the protein, preventing binding of all 3 substrates. Its function is as follows. Catalyzes the attachment of threonine to tRNA(Thr) in a two-step reaction: threonine is first activated by ATP to form Thr-AMP and then transferred to the acceptor end of tRNA(Thr). Also edits incorrectly charged tRNA(Thr) via its editing domain, at the post-transfer stage. This is Threonine--tRNA ligase 1, cytoplasmic from Homo sapiens (Human).